Consider the following 621-residue polypeptide: Microbial serine proteinase (621 aa).

Positions 1 to 24 (MRKTSLALAISALLSALPIASVQA) are cleaved as a signal peptide. Residues 68–440 (PRGGMAGNDL…FGLVDVNKTQ (373 aa)) form the Peptidase S8 domain. Aspartate 98 (charge relay system) is an active-site residue. The disordered stretch occupies residues 114 to 133 (PGSKNVVTGGSDPTPTDPDR). Active-site charge relay system residues include histidine 137 and serine 354. The P/Homo B domain maps to 454 to 619 (AVALAKGKGN…GYSVLGHDAA (166 aa)). Positions 457-485 (LAKGKGNGRSPSAPSRYVGSSPTRSSTQV) are disordered. Residues 465–485 (RSPSAPSRYVGSSPTRSSTQV) show a composition bias toward polar residues.

It belongs to the peptidase S8 family.

Its function is as follows. Agent of furonculosis. The chain is Microbial serine proteinase (aspA) from Aeromonas salmonicida.